Here is a 332-residue protein sequence, read N- to C-terminus: Biotin synthase (332 aa).

A Radical SAM core domain is found at 53–282 (YFGKKVKLNM…SKEIRISGGR (230 aa)). [4Fe-4S] cluster-binding residues include Cys-71, Cys-75, and Cys-78. Positions 115, 147, 207, and 277 each coordinate [2Fe-2S] cluster.

The protein belongs to the radical SAM superfamily. Biotin synthase family. Homodimer. It depends on [4Fe-4S] cluster as a cofactor. [2Fe-2S] cluster is required as a cofactor.

It catalyses the reaction (4R,5S)-dethiobiotin + (sulfur carrier)-SH + 2 reduced [2Fe-2S]-[ferredoxin] + 2 S-adenosyl-L-methionine = (sulfur carrier)-H + biotin + 2 5'-deoxyadenosine + 2 L-methionine + 2 oxidized [2Fe-2S]-[ferredoxin]. The protein operates within cofactor biosynthesis; biotin biosynthesis; biotin from 7,8-diaminononanoate: step 2/2. In terms of biological role, catalyzes the conversion of dethiobiotin (DTB) to biotin by the insertion of a sulfur atom into dethiobiotin via a radical-based mechanism. This Bacillus cytotoxicus (strain DSM 22905 / CIP 110041 / 391-98 / NVH 391-98) protein is Biotin synthase.